The primary structure comprises 239 residues: Probable 2-phosphosulfolactate phosphatase (239 aa).

It belongs to the ComB family. Mg(2+) serves as cofactor.

The catalysed reaction is (2R)-O-phospho-3-sulfolactate + H2O = (2R)-3-sulfolactate + phosphate. The sequence is that of Probable 2-phosphosulfolactate phosphatase from Clostridium botulinum (strain Loch Maree / Type A3).